The sequence spans 427 residues: Flotillin-1 (427 aa).

3 positions are modified to phosphoserine: serine 19, serine 163, and serine 385. Threonine 387 carries the phosphothreonine modification.

Belongs to the band 7/mec-2 family. Flotillin subfamily. Heterooligomeric complex of flotillin-1 and flotillin-2 and caveolin-1 and caveolin-2. Interacts with ECPAS.

It localises to the cell membrane. It is found in the endosome. The protein localises to the membrane. Its subcellular location is the caveola. The protein resides in the melanosome. It localises to the membrane raft. Its function is as follows. May act as a scaffolding protein within caveolar membranes, functionally participating in formation of caveolae or caveolae-like vesicles. This chain is Flotillin-1 (FLOT1), found in Pongo abelii (Sumatran orangutan).